The sequence spans 269 residues: Magnetosome protein MamX (269 aa).

Residues 1–10 (MNTKAVAHPD) are Cytoplasmic-facing. A helical transmembrane segment spans residues 11 to 31 (IAVWIMALGIAFSMALVLTAL). Over 32–269 (FNANPWEDHT…NVGGVDAEER (238 aa)) the chain is Lumenal. Positions 48–71 (IVAGMAAPHRDGREKMVCSSCHIV) match the MCR (magnetochrome) 1 motif. Residues Cys-65, Cys-68, His-69, Cys-104, Cys-107, and His-108 each contribute to the heme site. Positions 87–110 (IVEGTPAPHVDGREKMACASCHTI) match the MCR 2 motif.

The protein belongs to the magnetosome MamX family. In terms of assembly, probably interacts with FtsZ-like and MamY proteins. It depends on heme as a cofactor.

The protein resides in the magnetosome membrane. Required for correct biomineralization of the magnetosome, maybe via redox control. May function with MamY, MamZ amd Mms6 in biomineralization. This chain is Magnetosome protein MamX, found in Magnetospirillum gryphiswaldense (strain DSM 6361 / JCM 21280 / NBRC 15271 / MSR-1).